The following is a 739-amino-acid chain: Endoglucanase F (739 aa).

Positions 1 to 27 (MKKILAFLLTVALVAVVAIPQAVVSFA) are cleaved as a signal peptide. A catalytic region spans residues 28 to 470 (ADFNYGEALQ…AKMYEKYGGE (443 aa)). Residue aspartate 84 is the Nucleophile of the active site. Catalysis depends on residues histidine 400, aspartate 438, and glutamate 447. Residues 480–639 (TPGEEFYVEA…NVRVWGKVPD (160 aa)) enclose the CBM3 domain. The region spanning 664–737 (PGIMLGDVNF…ILKLIEKFPA (74 aa)) is the Dockerin domain.

The protein belongs to the glycosyl hydrolase 9 (cellulase E) family. Ca(2+) is required as a cofactor.

It carries out the reaction Endohydrolysis of (1-&gt;4)-beta-D-glucosidic linkages in cellulose, lichenin and cereal beta-D-glucans.. In terms of biological role, this enzyme catalyzes the endohydrolysis of 1,4-beta-glucosidic linkages in cellulose, lichenin and cereal beta-D-glucans. The sequence is that of Endoglucanase F (celF) from Acetivibrio thermocellus (strain ATCC 27405 / DSM 1237 / JCM 9322 / NBRC 103400 / NCIMB 10682 / NRRL B-4536 / VPI 7372) (Clostridium thermocellum).